A 61-amino-acid polypeptide reads, in one-letter code: Small ribosomal subunit protein uS14 (61 aa).

Residues Cys-24, Cys-27, Cys-40, and Cys-43 each coordinate Zn(2+).

This sequence belongs to the universal ribosomal protein uS14 family. Zinc-binding uS14 subfamily. As to quaternary structure, part of the 30S ribosomal subunit. Contacts proteins S3 and S10. Zn(2+) serves as cofactor.

Functionally, binds 16S rRNA, required for the assembly of 30S particles and may also be responsible for determining the conformation of the 16S rRNA at the A site. This Rhodococcus erythropolis (strain PR4 / NBRC 100887) protein is Small ribosomal subunit protein uS14.